The following is a 305-amino-acid chain: Leucine-rich repeat-containing protein 25 (305 aa).

Positions 1-20 (MGGTLAWTLLLPLLLRESDS) are cleaved as a signal peptide. The Extracellular segment spans residues 21 to 165 (LEPSCTVSSA…SCAPGLASAT (145 aa)). 3 LRR repeats span residues 39 to 59 (SATC…QSLR), 62 to 83 (NVIL…FFAH), and 86 to 107 (KLEV…LAAR). N-linked (GlcNAc...) asparagine glycosylation is found at asparagine 44 and asparagine 55. Asparagine 130 and asparagine 148 each carry an N-linked (GlcNAc...) asparagine glycan. A helical transmembrane segment spans residues 166–186 (IGAVVVSGCLLLGLAIAGPVL). Residues 187 to 305 (AWRLWRCRVA…DEEEYVIPGH (119 aa)) are Cytoplasmic-facing. Residues 204 to 229 (PWAAQDGPKPGLGLQPRYGSRSAPKP) form a disordered region. Phosphotyrosine is present on tyrosine 284.

In terms of assembly, interacts with RIGI. Interacts with SQSTM1. Interacts with p65/RELA; this interaction promotes the degradation of RELA through autophagy. In terms of tissue distribution, expressed in plasmacytoid dendritic cells (PDC), monocyte-derived dendritic cells (MDDC), granulocytes, monocytes, B-lymphocytes, peripheral blood leukocytes, spleen, bone marrow, and, to a lesser extent, lymph nodes, fetal liver, and appendix but not in thymus.

The protein resides in the membrane. Its subcellular location is the cytoplasm. In terms of biological role, plays a role in the inhibition of RLR-mediated type I interferon signaling pathway by targeting RIGI for autophagic degradation. Interacts specifically with ISG15-associated RIGI to promote interaction between RIGI and the autophagic cargo receptor p62/SQSTM1 to mediate RIGI degradation via selective autophagy. Also plays a role in the inhibition of NF-kappa-B signaling pathway and inflammatory response by promoting the degradation of p65/RELA. In Homo sapiens (Human), this protein is Leucine-rich repeat-containing protein 25 (LRRC25).